We begin with the raw amino-acid sequence, 227 residues long: Orotidine 5'-phosphate decarboxylase (227 aa).

Substrate contacts are provided by residues Asp8, Lys30, 59–68 (DLKLYDIPYT), Thr118, Arg178, Gln187, Gly207, and Arg208. Lys61 functions as the Proton donor in the catalytic mechanism.

It belongs to the OMP decarboxylase family. Type 1 subfamily. In terms of assembly, homodimer.

It catalyses the reaction orotidine 5'-phosphate + H(+) = UMP + CO2. It functions in the pathway pyrimidine metabolism; UMP biosynthesis via de novo pathway; UMP from orotate: step 2/2. Catalyzes the decarboxylation of orotidine 5'-monophosphate (OMP) to uridine 5'-monophosphate (UMP). The chain is Orotidine 5'-phosphate decarboxylase from Helicobacter pylori (strain ATCC 700392 / 26695) (Campylobacter pylori).